The following is a 237-amino-acid chain: Ergosterol biosynthesis protein 29 (237 aa).

Residues 36–56 form a helical membrane-spanning segment; the sequence is ITLFLIVVGTLAFFNELYITI.

Its subcellular location is the endoplasmic reticulum membrane. Its function is as follows. Part of the third module of ergosterol biosynthesis pathway that includes the late steps of the pathway. ERG29 regulates the activity of the iron-containing C4-methylsterol oxidase ERG25. The third module or late pathway involves the ergosterol synthesis itself through consecutive reactions that mainly occur in the endoplasmic reticulum (ER) membrane. Firstly, the squalene synthase ERG9 catalyzes the condensation of 2 farnesyl pyrophosphate moieties to form squalene, which is the precursor of all steroids. Squalene synthase is crucial for balancing the incorporation of farnesyl diphosphate (FPP) into sterol and nonsterol isoprene synthesis. Secondly, the squalene epoxidase ERG1 catalyzes the stereospecific oxidation of squalene to (S)-2,3-epoxysqualene, which is considered to be a rate-limiting enzyme in steroid biosynthesis. Then, the lanosterol synthase ERG7 catalyzes the cyclization of (S)-2,3 oxidosqualene to lanosterol, a reaction that forms the sterol core. In the next steps, lanosterol is transformed to zymosterol through a complex process involving various demethylation, reduction and desaturation reactions. The lanosterol 14-alpha-demethylase ERG11 (also known as CYP51) catalyzes C14-demethylation of lanosterol to produce 4,4'-dimethyl cholesta-8,14,24-triene-3-beta-ol, which is critical for ergosterol biosynthesis. The C-14 reductase ERG24 reduces the C14=C15 double bond of 4,4-dimethyl-cholesta-8,14,24-trienol to produce 4,4-dimethyl-cholesta-8,24-dienol. 4,4-dimethyl-cholesta-8,24-dienol is substrate of the C-4 demethylation complex ERG25-ERG26-ERG27 in which ERG25 catalyzes the three-step monooxygenation required for the demethylation of 4,4-dimethyl and 4alpha-methylsterols, ERG26 catalyzes the oxidative decarboxylation that results in a reduction of the 3-beta-hydroxy group at the C-3 carbon to an oxo group, and ERG27 is responsible for the reduction of the keto group on the C-3. ERG28 has a role as a scaffold to help anchor ERG25, ERG26 and ERG27 to the endoplasmic reticulum and ERG29 regulates the activity of the iron-containing C4-methylsterol oxidase ERG25. Then, the sterol 24-C-methyltransferase ERG6 catalyzes the methyl transfer from S-adenosyl-methionine to the C-24 of zymosterol to form fecosterol. The C-8 sterol isomerase ERG2 catalyzes the reaction which results in unsaturation at C-7 in the B ring of sterols and thus converts fecosterol to episterol. The sterol-C5-desaturase ERG3 then catalyzes the introduction of a C-5 double bond in the B ring to produce 5-dehydroepisterol. The C-22 sterol desaturase ERG5 further converts 5-dehydroepisterol into ergosta-5,7,22,24(28)-tetraen-3beta-ol by forming the C-22(23) double bond in the sterol side chain. Finally, ergosta-5,7,22,24(28)-tetraen-3beta-ol is substrate of the C-24(28) sterol reductase ERG4 to produce ergosterol. In terms of biological role, plays a role in maintaining mitochondrial and plasma membrane integrity and consequently impacting the iron homeostasis, respiratory metabolism and antioxidant response. In Saccharomyces cerevisiae (strain ATCC 204508 / S288c) (Baker's yeast), this protein is Ergosterol biosynthesis protein 29.